The chain runs to 162 residues: UPF0260 protein Caul_3920 (162 aa).

This sequence belongs to the UPF0260 family.

The chain is UPF0260 protein Caul_3920 from Caulobacter sp. (strain K31).